Here is a 293-residue protein sequence, read N- to C-terminus: Transcription elongation factor S-II (293 aa).

The TFIIS N-terminal domain occupies 4-81 (ADIRSAKAAL…KKWKADVSKG (78 aa)). Residues 81-123 (GRPLKTTTTTSSTPSKHADVGSQAQKQVQKQSSSGQRTFKSDN) are disordered. A compositionally biased stretch (low complexity) spans 100–116 (VGSQAQKQVQKQSSSGQ). The region spanning 133 to 248 (IRNNCIGLMY…HAQGAKPQKA (116 aa)) is the TFIIS central domain. The TFIIS-type zinc-finger motif lies at 251 to 291 (DLFTCGKCKQKKVSYYQMQTRSADEPMTTFCECTVCGNRWK). Positions 255, 258, 283, and 286 each coordinate Zn(2+).

The protein belongs to the TFS-II family.

The protein localises to the nucleus. Necessary for efficient RNA polymerase II transcription elongation past template-encoded arresting sites. The arresting sites in DNA have the property of trapping a certain fraction of elongating RNA polymerases that pass through, resulting in locked ternary complexes. Cleavage of the nascent transcript by S-II allows the resumption of elongation from the new 3'-terminus. The chain is Transcription elongation factor S-II (tfs1) from Schizosaccharomyces pombe (strain 972 / ATCC 24843) (Fission yeast).